A 480-amino-acid chain; its full sequence is Acetyl-coenzyme A carboxylase carboxyl transferase subunit beta, chloroplastic (480 aa).

Residues 212 to 480 form the CoA carboxyltransferase N-terminal domain; sequence LWVQCENCYG…FPLNQINKYK (269 aa). Residues C216, C219, C235, and C238 each coordinate Zn(2+). Residues 216 to 238 form a C4-type zinc finger; the sequence is CENCYGLNYQKFFRSKMNICERC.

It belongs to the AccD/PCCB family. Acetyl-CoA carboxylase is a heterohexamer composed of biotin carboxyl carrier protein, biotin carboxylase and 2 subunits each of ACCase subunit alpha and ACCase plastid-coded subunit beta (accD). Zn(2+) serves as cofactor.

The protein localises to the plastid. It localises to the chloroplast stroma. The enzyme catalyses N(6)-carboxybiotinyl-L-lysyl-[protein] + acetyl-CoA = N(6)-biotinyl-L-lysyl-[protein] + malonyl-CoA. It participates in lipid metabolism; malonyl-CoA biosynthesis; malonyl-CoA from acetyl-CoA: step 1/1. In terms of biological role, component of the acetyl coenzyme A carboxylase (ACC) complex. Biotin carboxylase (BC) catalyzes the carboxylation of biotin on its carrier protein (BCCP) and then the CO(2) group is transferred by the transcarboxylase to acetyl-CoA to form malonyl-CoA. This chain is Acetyl-coenzyme A carboxylase carboxyl transferase subunit beta, chloroplastic, found in Illicium oligandrum (Star anise).